A 334-amino-acid chain; its full sequence is MTPIDAKRPLQLNDQGQLRHFLSLDGLPRELLTEILDTADSFLEVGARAVKKVPLLRGKTVCNVFFENSTRTRTTFELAAQRLSADVISLNVSTSSTSKGETLFDTLRNLEAMAADMFVVRHSDSGAAHFIAEHVCPEVAVINGGDGRHAHPTQGMLDMLTIRRHKGSFENLSVAIVGDILHSRVARSDMLALKALGCPDIRVIGPKTLIPIGIEQYGVKVYTDLAEGLKDVDVVIMLRLQRERMAGGLLPSEGEFYRLFGLTTARLAGAKPDAIVMHPGPINRGVEIESAVADGKHSVILNQVTYGIAVRMAVLSMAMSGQNAQRQLDQENAQ.

Carbamoyl phosphate contacts are provided by Arg-71 and Thr-72. Lys-99 lines the L-aspartate pocket. The carbamoyl phosphate site is built by Arg-121, His-151, and Gln-154. L-aspartate contacts are provided by Arg-184 and Arg-239. Positions 280 and 281 each coordinate carbamoyl phosphate.

This sequence belongs to the aspartate/ornithine carbamoyltransferase superfamily. ATCase family. Heterododecamer (2C3:3R2) of six catalytic PyrB chains organized as two trimers (C3), and six regulatory PyrI chains organized as three dimers (R2).

The catalysed reaction is carbamoyl phosphate + L-aspartate = N-carbamoyl-L-aspartate + phosphate + H(+). It functions in the pathway pyrimidine metabolism; UMP biosynthesis via de novo pathway; (S)-dihydroorotate from bicarbonate: step 2/3. In terms of biological role, catalyzes the condensation of carbamoyl phosphate and aspartate to form carbamoyl aspartate and inorganic phosphate, the committed step in the de novo pyrimidine nucleotide biosynthesis pathway. In Pseudomonas putida (strain ATCC 47054 / DSM 6125 / CFBP 8728 / NCIMB 11950 / KT2440), this protein is Aspartate carbamoyltransferase catalytic subunit.